Reading from the N-terminus, the 313-residue chain is MAFDEICDEIILNYEDAKDFAYILKLTYLNEFKKLENLNLNKFGIIKKDDLSFYGKNYPLFKSLLFFNEIPVFRGEKESILFLKSIGLSPRITLNSLTYKEKIKLGNEFLKRCINFVPKEYISYIPQLIFGKEYYFRGVCLKEYVSALNGLYKIGKKKKVKKLIINMELPDEKDVKKYKKKLAKKITLFNKKLENYEINYFNLKFNNKNFECQYIYVKQSVWDKILGLFGEGIELKYYPTLVNIAYSSEKVDFLKPFFIFVDKGDISVYAKVPKLIYLKDGLSLNYLNLRGKYVYFGNWEKDKFWEIIERGVL.

This sequence to M.jannaschii MJ0977 C-terminal region.

This is an uncharacterized protein from Methanocaldococcus jannaschii (strain ATCC 43067 / DSM 2661 / JAL-1 / JCM 10045 / NBRC 100440) (Methanococcus jannaschii).